Consider the following 206-residue polypeptide: Urease accessory protein UreG (206 aa).

15–22 (GPVGSGKT) serves as a coordination point for GTP.

Belongs to the SIMIBI class G3E GTPase family. UreG subfamily. As to quaternary structure, homodimer. UreD, UreF and UreG form a complex that acts as a GTP-hydrolysis-dependent molecular chaperone, activating the urease apoprotein by helping to assemble the nickel containing metallocenter of UreC. The UreE protein probably delivers the nickel.

The protein resides in the cytoplasm. In terms of biological role, facilitates the functional incorporation of the urease nickel metallocenter. This process requires GTP hydrolysis, probably effectuated by UreG. The sequence is that of Urease accessory protein UreG from Ralstonia pickettii (strain 12J).